We begin with the raw amino-acid sequence, 156 residues long: Low molecular weight phosphotyrosine protein phosphatase (156 aa).

The active-site Nucleophile is Cys-11. Arg-17 is a catalytic residue. Residue Asp-128 is the Proton donor of the active site.

It belongs to the low molecular weight phosphotyrosine protein phosphatase family.

The protein resides in the cytoplasm. It catalyses the reaction O-phospho-L-tyrosyl-[protein] + H2O = L-tyrosyl-[protein] + phosphate. The enzyme catalyses a phosphate monoester + H2O = an alcohol + phosphate. May contribute to dephosphorylation of 'Tyr-15' of cdc2. This Schizosaccharomyces pombe (strain 972 / ATCC 24843) (Fission yeast) protein is Low molecular weight phosphotyrosine protein phosphatase (stp1).